Reading from the N-terminus, the 465-residue chain is Argininosuccinate lyase (465 aa).

The protein belongs to the lyase 1 family. Argininosuccinate lyase subfamily.

The protein localises to the cytoplasm. The catalysed reaction is 2-(N(omega)-L-arginino)succinate = fumarate + L-arginine. It functions in the pathway amino-acid biosynthesis; L-arginine biosynthesis; L-arginine from L-ornithine and carbamoyl phosphate: step 3/3. This chain is Argininosuccinate lyase, found in Hyphomonas neptunium (strain ATCC 15444).